Reading from the N-terminus, the 64-residue chain is MRCVPVFVILLLLIASAPSVDARLKTKDDMPLPSSHANIKRTLQIHRNKRCCPGWELCCEWDEW.

Residues 1–19 (MRCVPVFVILLLLIASAPS) form the signal peptide. A propeptide spanning residues 20–48 (VDARLKTKDDMPLPSSHANIKRTLQIHRN) is cleaved from the precursor. E60 is modified (4-carboxyglutamate).

The protein belongs to the conotoxin T superfamily. Contains 2 disulfide bonds that can be either 'C1-C3, C2-C4' or 'C1-C4, C2-C3', since these disulfide connectivities have been observed for conotoxins with cysteine framework V (for examples, see AC P0DQQ7 and AC P81755). As to expression, expressed by the venom duct.

The protein resides in the secreted. In Conus marmoreus (Marble cone), this protein is Conotoxin mr5.1a.